Reading from the N-terminus, the 342-residue chain is Galactose mutarotase (342 aa).

N-acetylalanine is present on Ala2. Position 14 is a phosphoserine (Ser14). Residues 81-82 (NR) and His107 each bind beta-D-galactose. The residue at position 124 (Ser124) is a Phosphoserine. The active-site Proton donor is His176. Residues 176–178 (HSY), Asp243, Gln279, and Glu307 each bind beta-D-galactose. Glu307 (proton acceptor) is an active-site residue.

The protein belongs to the aldose epimerase family. Monomer.

The protein resides in the cytoplasm. It catalyses the reaction alpha-D-galactose = beta-D-galactose. The enzyme catalyses alpha-D-glucose = beta-D-glucose. The protein operates within carbohydrate metabolism; hexose metabolism. It participates in carbohydrate metabolism; galactose metabolism. Mutarotase that catalyzes the interconversion of beta-D-galactose and alpha-D-galactose during galactose metabolism. Beta-D-galactose is metabolized in the liver into glucose 1-phosphate, the primary metabolic fuel, by the action of four enzymes that constitute the Leloir pathway: GALM, GALK1 (galactokinase), GALT (galactose-1-phosphate uridylyltransferase) and GALE (UDP-galactose-4'-epimerase). Involved in the maintenance of the equilibrium between the beta- and alpha-anomers of galactose, therefore ensuring a sufficient supply of the alpha-anomer for GALK1. Also active on D-glucose although shows a preference for galactose over glucose. This is Galactose mutarotase (GALM) from Pongo abelii (Sumatran orangutan).